The primary structure comprises 132 residues: Large ribosomal subunit protein uL14 (132 aa).

Belongs to the universal ribosomal protein uL14 family. Part of the 50S ribosomal subunit. Forms a cluster with proteins L3 and L24e, part of which may contact the 16S rRNA in 2 intersubunit bridges.

Binds to 23S rRNA. Forms part of two intersubunit bridges in the 70S ribosome. This Methanosarcina acetivorans (strain ATCC 35395 / DSM 2834 / JCM 12185 / C2A) protein is Large ribosomal subunit protein uL14.